The chain runs to 110 residues: Thioredoxin Asp f 29 (110 aa).

Residues 1 to 110 (MSHNVEKITD…LEAAIKAHVA (110 aa)) form the Thioredoxin domain. Residues Cys34 and Cys37 each act as nucleophile in the active site. A disulfide bridge connects residues Cys34 and Cys37.

This sequence belongs to the thioredoxin family.

Its function is as follows. Participates in various redox reactions through the reversible oxidation of its active center dithiol to a disulfide and catalyzes dithiol-disulfide exchange reactions. This Aspergillus fumigatus (Neosartorya fumigata) protein is Thioredoxin Asp f 29.